The following is a 313-amino-acid chain: Homoserine kinase (313 aa).

Position 92–102 (92–102) interacts with ATP; sequence PPGRGLGSSGA.

It belongs to the GHMP kinase family. Homoserine kinase subfamily.

The protein resides in the cytoplasm. It carries out the reaction L-homoserine + ATP = O-phospho-L-homoserine + ADP + H(+). It functions in the pathway amino-acid biosynthesis; L-threonine biosynthesis; L-threonine from L-aspartate: step 4/5. Functionally, catalyzes the ATP-dependent phosphorylation of L-homoserine to L-homoserine phosphate. This is Homoserine kinase from Aeropyrum pernix (strain ATCC 700893 / DSM 11879 / JCM 9820 / NBRC 100138 / K1).